A 230-amino-acid polypeptide reads, in one-letter code: Ribonuclease 3 (230 aa).

The RNase III domain occupies Leu-7–Gly-134. Glu-47 is a binding site for Mg(2+). Residue Asp-51 is part of the active site. Residues Asp-120 and Glu-123 each contribute to the Mg(2+) site. Residue Glu-123 is part of the active site. In terms of domain architecture, DRBM spans Asp-161–Asn-230.

This sequence belongs to the ribonuclease III family. As to quaternary structure, homodimer. Mg(2+) serves as cofactor.

The protein localises to the cytoplasm. It carries out the reaction Endonucleolytic cleavage to 5'-phosphomonoester.. Functionally, digests double-stranded RNA. Involved in the processing of primary rRNA transcript to yield the immediate precursors to the large and small rRNAs (23S and 16S). Processes some mRNAs, and tRNAs when they are encoded in the rRNA operon. Processes pre-crRNA and tracrRNA of type II CRISPR loci if present in the organism. In Clostridium acetobutylicum (strain ATCC 824 / DSM 792 / JCM 1419 / IAM 19013 / LMG 5710 / NBRC 13948 / NRRL B-527 / VKM B-1787 / 2291 / W), this protein is Ribonuclease 3.